Here is a 312-residue protein sequence, read N- to C-terminus: MDPVPSSASHGNLDEQIAQLMQCKPLSEQEVRGLCEKAKEILMEESNVQPVKSPVTICGDIHGQFHDLAELFRIGGKCPDTNYLFMGDYVDRGYYSVETVTLLVALKVRYPQRITILRGNHESRQITQVYGFYDECLRKYGNANVWKTFTDLFDYFPLTALVESEIFCLHGGLSPSIETLDNIRNFDRVQEVPHEGAMCDLLWSDPDDRCGWGISPRGAGYTFGQDISEQFNHTNNLKLIARAHQLVMEGFNWAHDQKVVTIFSAPNYCYRCGNMASILEVDDSRERTFIQFEPAPRRGEPDVTRRTPDYFL.

4 residues coordinate Mn(2+): aspartate 60, histidine 62, aspartate 88, and asparagine 120. The Proton donor role is filled by histidine 121. Residues histidine 170 and histidine 244 each contribute to the Mn(2+) site.

Belongs to the PPP phosphatase family. PP-2A subfamily. Mn(2+) is required as a cofactor.

Its subcellular location is the cytoplasm. The catalysed reaction is O-phospho-L-seryl-[protein] + H2O = L-seryl-[protein] + phosphate. It catalyses the reaction O-phospho-L-threonyl-[protein] + H2O = L-threonyl-[protein] + phosphate. The chain is Serine/threonine-protein phosphatase PP2A catalytic subunit from Nicotiana tabacum (Common tobacco).